A 152-amino-acid polypeptide reads, in one-letter code: Lipoprotein signal peptidase (152 aa).

A run of 2 helical transmembrane segments spans residues 55 to 75 (NGRW…LYYL) and 87 to 107 (VALG…IATG). Residues Asp111 and Asp129 contribute to the active site. A helical membrane pass occupies residues 125 to 145 (FNVADICVTVGVGLLFLHLVL).

It belongs to the peptidase A8 family.

Its subcellular location is the cell membrane. It catalyses the reaction Release of signal peptides from bacterial membrane prolipoproteins. Hydrolyzes -Xaa-Yaa-Zaa-|-(S,diacylglyceryl)Cys-, in which Xaa is hydrophobic (preferably Leu), and Yaa (Ala or Ser) and Zaa (Gly or Ala) have small, neutral side chains.. Its pathway is protein modification; lipoprotein biosynthesis (signal peptide cleavage). Functionally, this protein specifically catalyzes the removal of signal peptides from prolipoproteins. The sequence is that of Lipoprotein signal peptidase from Symbiobacterium thermophilum (strain DSM 24528 / JCM 14929 / IAM 14863 / T).